The chain runs to 427 residues: Indole diterpene prenyltransferase idtF (427 aa).

Substrate is bound by residues Arg-97, Lys-195, Arg-264, Lys-266, Tyr-268, and Tyr-352.

Belongs to the tryptophan dimethylallyltransferase family.

Its pathway is secondary metabolite biosynthesis. Functionally, indole diterpene prenyltransferase; part of the gene cluster that mediates the biosynthesis of paspalitrems, indole-diterpene (IDT) mycotoxins that are potent tremorgens in mammals. The geranylgeranyl diphosphate (GGPP) synthase idtG is proposed to catalyze the first step in IDT biosynthesis via catalysis of a series of iterative condensations of isopentenyl diphosphate (IPP) with dimethylallyl diphosphate (DMAPP), geranyl diphosphate (GPP), and farnesyl diphosphate (FPP), to form GGPP. Condensation of indole-3-glycerol phosphate with GGPP by the prenyltransferase idtC then forms 3-geranylgeranylindole (3-GGI). Epoxidation of the two terminal alkenes of the geranylgeranyl moiety by the FAD-dependent monooxygenase idtM, and cyclization by the terpene cyclase idtB then leads to the production of paspaline. The cytochrome P450 monooxygenase idtP then catalyzes oxidative elimination of the pendant methyl group at C-12 of paspaline and generates the C-10 ketone to yield 13-desoxypaxilline. The cytochrome P450 monooxygenase idtQ may catalyze the C-13 oxidation of 13-desoxypaxilline to afford paxilline. Considering that both paspalicine and paxilline were detected in C.paspali, idtQ also catalyzes the formation of paspalinine from 13-desoxypaxilline via paspalicine as an intermediate. Finally, the alpha-prenyltransferase idtF prenylates paspalinine at the C-20 or the C-21 positions to yield paspalitrems A and C, respectively. The hydroxylation of paspalitrem A at C-32 by a still unknown oxidase affords paspalitrem B. The polypeptide is Indole diterpene prenyltransferase idtF (Claviceps paspali (Rye ergot fungus)).